The sequence spans 160 residues: MRIGLFAVGRLKAGPEKDLAGRYLDRFAKAGPAVGLELARVVETAESRAANAETRKREEAGQLEKALADGSLLVLLDERGKALDSEAFARLLGTLRDSGKRDLMIAIGGADGLDPALHARADAVLNLGKMTWPHQLVRILIAEQLYRAVTILSGHPYHRA.

Residues Leu76, Gly108, and 127-132 (LGKMTW) each bind S-adenosyl-L-methionine.

Belongs to the RNA methyltransferase RlmH family. Homodimer.

It localises to the cytoplasm. The catalysed reaction is pseudouridine(1915) in 23S rRNA + S-adenosyl-L-methionine = N(3)-methylpseudouridine(1915) in 23S rRNA + S-adenosyl-L-homocysteine + H(+). In terms of biological role, specifically methylates the pseudouridine at position 1915 (m3Psi1915) in 23S rRNA. This is Ribosomal RNA large subunit methyltransferase H from Rhizobium meliloti (strain 1021) (Ensifer meliloti).